Consider the following 225-residue polypeptide: uncharacterized protein (225 aa).

Residues 32-82 (PKDKKKQNDTENKKKQPKDGENDKQKEQAETQPFEWIQQKDADDKKESNTA) form a disordered region. Composition is skewed to basic and acidic residues over residues 37–60 (KQNDTENKKKQPKDGENDKQKEQA) and 69–79 (QQKDADDKKES).

The protein belongs to the MG067/MG068/MG395 family.

This is an uncharacterized protein from Mycoplasma pneumoniae (strain ATCC 29342 / M129 / Subtype 1) (Mycoplasmoides pneumoniae).